Reading from the N-terminus, the 908-residue chain is Probable disease resistance RPP8-like protein 4 (908 aa).

Residues 15 to 57 adopt a coiled-coil conformation; that stretch reads DLLSRESERLQGIDEQLDGLKRQLRSLQSLLKDADAKKHGSDR. The NB-ARC domain occupies 146–459; the sequence is RQRVQREIRQ…AEGIYDGSTI (314 aa). Residue 192–199 participates in ATP binding; the sequence is GMGGIGKT. LRR repeat units follow at residues 575 to 599, 600 to 623, and 842 to 867; these read LTLL…SIGG, LIHL…MRNL, and MPCL…KYIT.

Belongs to the disease resistance NB-LRR family. RPP8/HRT subfamily.

Functionally, potential disease resistance protein. This chain is Probable disease resistance RPP8-like protein 4 (RPP8L4), found in Arabidopsis thaliana (Mouse-ear cress).